Reading from the N-terminus, the 368-residue chain is Phosphate acyltransferase (368 aa).

The segment at 337–368 (LEQAARDASGAGQASPIAGQPAEPYAAQSSKA) is disordered.

It belongs to the PlsX family. Homodimer. Probably interacts with PlsY.

The protein localises to the cytoplasm. It catalyses the reaction a fatty acyl-[ACP] + phosphate = an acyl phosphate + holo-[ACP]. It functions in the pathway lipid metabolism; phospholipid metabolism. Functionally, catalyzes the reversible formation of acyl-phosphate (acyl-PO(4)) from acyl-[acyl-carrier-protein] (acyl-ACP). This enzyme utilizes acyl-ACP as fatty acyl donor, but not acyl-CoA. This Paraburkholderia phytofirmans (strain DSM 17436 / LMG 22146 / PsJN) (Burkholderia phytofirmans) protein is Phosphate acyltransferase.